The following is a 632-amino-acid chain: X-ray repair cross-complementing protein 5 (632 aa).

The active-site Schiff-base intermediate with DNA; for 5'-deoxyribose-5-phosphate lyase activity is the arginine 52. Residues 283-490 (LYLNKDLSFS…VDKMKGIIQK (208 aa)) enclose the Ku domain. A disordered region spans residues 555 to 578 (DYSPEGKAAKRKQAGDAQAEKRPK). An SAP domain is found at 595-629 (LGKLTVSALKDTCRHYGLRSGGKKQELIDALTEYF).

It belongs to the ku70 family. Heterodimer composed of XRCC5/Ku80 and XRCC6/Ku70. Component of the core long-range non-homologous end joining (NHEJ) complex (also named DNA-PK complex) composed of PRKDC, LIG4, XRCC4, XRCC6/Ku70, XRCC5/Ku86 and NHEJ1/XLF. Additional component of the NHEJ complex includes PAXX. Following autophosphorylation, PRKDC dissociates from DNA, leading to formation of the short-range NHEJ complex, composed of LIG4, XRCC4, XRCC6/Ku70, XRCC5/Ku86 and NHEJ1/XLF. Post-translationally, phosphorylated on serine residues.

It localises to the nucleus. The protein localises to the chromosome. Its function is as follows. Single-stranded DNA-dependent ATP-dependent helicase that plays a key role in DNA non-homologous end joining (NHEJ) by recruiting DNA-PK to DNA. Required for double-strand break repair and V(D)J recombination. Also has a role in chromosome translocation. Has a role in chromosome translocation. The DNA helicase II complex binds preferentially to fork-like ends of double-stranded DNA in a cell cycle-dependent manner. It works in the 3'-5' direction. During NHEJ, the XRCC5-XRRC6 dimer performs the recognition step: it recognizes and binds to the broken ends of the DNA and protects them from further resection. Binding to DNA may be mediated by XRCC6. The XRCC5-XRRC6 dimer acts as a regulatory subunit of the DNA-dependent protein kinase complex DNA-PK by increasing the affinity of the catalytic subunit PRKDC to DNA by 100-fold. The XRCC5-XRRC6 dimer is probably involved in stabilizing broken DNA ends and bringing them together. The assembly of the DNA-PK complex to DNA ends is required for the NHEJ ligation step. Probably also acts as a 5'-deoxyribose-5-phosphate lyase (5'-dRP lyase), by catalyzing the beta-elimination of the 5' deoxyribose-5-phosphate at an abasic site near double-strand breaks. 5'-dRP lyase activity allows to 'clean' the termini of abasic sites, a class of nucleotide damage commonly associated with strand breaks, before such broken ends can be joined. The XRCC5-XRRC6 dimer together with APEX1 acts as a negative regulator of transcription. The polypeptide is X-ray repair cross-complementing protein 5 (XRCC6) (Gallus gallus (Chicken)).